A 211-amino-acid chain; its full sequence is N-(5'-phosphoribosyl)anthranilate isomerase (211 aa).

It belongs to the TrpF family.

The enzyme catalyses N-(5-phospho-beta-D-ribosyl)anthranilate = 1-(2-carboxyphenylamino)-1-deoxy-D-ribulose 5-phosphate. It participates in amino-acid biosynthesis; L-tryptophan biosynthesis; L-tryptophan from chorismate: step 3/5. This Methanococcus maripaludis (strain C6 / ATCC BAA-1332) protein is N-(5'-phosphoribosyl)anthranilate isomerase.